The primary structure comprises 238 residues: Group 3 late-embryogenesis abundant protein, mitochondrial (238 aa).

The segment at 41–62 (SSGSGRPADNWAESQKEKAKAG) is disordered. The stretch at 50–202 (NWAESQKEKA…AGDLKDKAQQ (153 aa)) forms a coiled coil. LEA 11-mer repeat repeat units follow at residues 64–74 (KDAQAEVGKVA), 89–99 (KDAVKQGANDL), 140–150 (KEAAENAWEKT), 151–161 (KDVAENLKDKV), 179–189 (KDRAQDAASEV), and 190–200 (KHKAGDLKDKA). Composition is skewed to basic and acidic residues over residues 182 to 200 (AQDA…KDKA) and 213 to 225 (DNRK…RRDS). The interval 182-238 (AQDAASEVKHKAGDLKDKAQQVIHDATTQSGDNRKQDQQQRRDSQGSQSGQNSRSRN) is disordered. The span at 226-238 (QGSQSGQNSRSRN) shows a compositional bias: low complexity.

Belongs to the LEA type 4 family.

Its subcellular location is the mitochondrion. Its function is as follows. Mitochondrial heat soluble protein acting as a molecular shield in water-deficient condition. In Hypsibius exemplaris (Freshwater tardigrade), this protein is Group 3 late-embryogenesis abundant protein, mitochondrial.